The following is a 128-amino-acid chain: uncharacterized protein (128 aa).

This is an uncharacterized protein from Homo sapiens (Human).